The following is a 153-amino-acid chain: UPF0178 protein CC_1215 (153 aa).

Belongs to the UPF0178 family.

The polypeptide is UPF0178 protein CC_1215 (Caulobacter vibrioides (strain ATCC 19089 / CIP 103742 / CB 15) (Caulobacter crescentus)).